A 654-amino-acid polypeptide reads, in one-letter code: Meiotically up-regulated gene 24 protein (654 aa).

Residues 299 to 355 (RNVFIGNLPSSYHEKEIEEAFGKFGKIEHIKILSKKNIAFVHFLNIRDAIKVVRTLS) form the RRM 1 domain. The tract at residues 383–404 (SCFTSKQNPDTTSDRCRQQESK) is disordered. Over residues 384–393 (CFTSKQNPDT) the composition is skewed to polar residues. The segment covering 394 to 404 (TSDRCRQQESK) has biased composition (basic and acidic residues). RRM domains follow at residues 409 to 482 (RTVF…WGKE) and 500 to 571 (RNVY…YAPD).

Its subcellular location is the cytoplasm. In terms of biological role, has a role in meiosis. The chain is Meiotically up-regulated gene 24 protein (mug24) from Schizosaccharomyces pombe (strain 972 / ATCC 24843) (Fission yeast).